A 291-amino-acid chain; its full sequence is Nitrogenase iron protein (291 aa).

11 to 18 (GKGGIGKS) lines the ATP pocket. C99 provides a ligand contact to [4Fe-4S] cluster. ADP-ribosylarginine; by dinitrogenase reductase ADP-ribosyltransferase is present on R102. C133 provides a ligand contact to [4Fe-4S] cluster.

It belongs to the NifH/BchL/ChlL family. Homodimer. It depends on [4Fe-4S] cluster as a cofactor. In terms of processing, the reversible ADP-ribosylation of Arg-102 inactivates the nitrogenase reductase and regulates nitrogenase activity.

It carries out the reaction N2 + 8 reduced [2Fe-2S]-[ferredoxin] + 16 ATP + 16 H2O = H2 + 8 oxidized [2Fe-2S]-[ferredoxin] + 2 NH4(+) + 16 ADP + 16 phosphate + 6 H(+). Functionally, the key enzymatic reactions in nitrogen fixation are catalyzed by the nitrogenase complex, which has 2 components: the iron protein and the molybdenum-iron protein. This chain is Nitrogenase iron protein, found in Cereibacter sphaeroides (strain ATCC 17023 / DSM 158 / JCM 6121 / CCUG 31486 / LMG 2827 / NBRC 12203 / NCIMB 8253 / ATH 2.4.1.) (Rhodobacter sphaeroides).